A 290-amino-acid chain; its full sequence is Sodium/potassium-transporting ATPase subunit beta-2 (290 aa).

Over 1–39 (MVIQKEKKSCGQVVEEWKEFVWNPRTHQFMGRTGTSWAF) the chain is Cytoplasmic. A helical; Signal-anchor for type II membrane protein transmembrane segment spans residues 40 to 67 (ILLFYLVFYGFLTAMFTLTMWVMLQTVS). The Extracellular segment spans residues 68–290 (DHTPKYQDRL…VAFKLRINKA (223 aa)). Asn96 and Asn118 each carry an N-linked (GlcNAc...) asparagine glycan. The cysteines at positions 129 and 150 are disulfide-linked. N-linked (GlcNAc...) asparagine glycosylation is found at Asn153 and Asn159. A disulfide bridge links Cys160 with Cys177. Asn193, Asn197, and Asn238 each carry an N-linked (GlcNAc...) asparagine glycan. The interval 193–290 (NQSMNVTCVG…VAFKLRINKA (98 aa)) is immunoglobulin-like. A disulfide bridge links Cys200 with Cys261.

This sequence belongs to the X(+)/potassium ATPases subunit beta family. In terms of assembly, the sodium/potassium-transporting ATPase is composed of a catalytic alpha subunit, an auxiliary non-catalytic beta subunit and an additional regulatory subunit. Interacts with isoform 2 of BSG. In terms of tissue distribution, highly expressed in brain (at protein level).

The protein resides in the cell membrane. In terms of biological role, this is the non-catalytic component of the active enzyme, which catalyzes the hydrolysis of ATP coupled with the exchange of Na(+) and K(+) ions across the plasma membrane. The exact function of the beta-2 subunit is not known. Functionally, mediates cell adhesion of neurons and astrocytes, and promotes neurite outgrowth. In Rattus norvegicus (Rat), this protein is Sodium/potassium-transporting ATPase subunit beta-2 (Atp1b2).